Consider the following 176-residue polypeptide: RNA pyrophosphohydrolase (176 aa).

Residues 6–149 enclose the Nudix hydrolase domain; sequence GYRPNVGIVI…KRDVYRRVMK (144 aa). The Nudix box motif lies at 38 to 59; the sequence is GGINPGESAEQAMYRELFEEVG.

This sequence belongs to the Nudix hydrolase family. RppH subfamily. It depends on a divalent metal cation as a cofactor.

Accelerates the degradation of transcripts by removing pyrophosphate from the 5'-end of triphosphorylated RNA, leading to a more labile monophosphorylated state that can stimulate subsequent ribonuclease cleavage. The sequence is that of RNA pyrophosphohydrolase from Shigella boydii serotype 4 (strain Sb227).